Here is a 596-residue protein sequence, read N- to C-terminus: Elongation factor 4 (596 aa).

The tr-type G domain occupies 2 to 183 (KNIRNFSIIA…TIITKIPAPK (182 aa)). Residues 14–19 (DHGKST) and 130–133 (NKID) contribute to the GTP site.

The protein belongs to the TRAFAC class translation factor GTPase superfamily. Classic translation factor GTPase family. LepA subfamily.

It is found in the cell inner membrane. It carries out the reaction GTP + H2O = GDP + phosphate + H(+). Functionally, required for accurate and efficient protein synthesis under certain stress conditions. May act as a fidelity factor of the translation reaction, by catalyzing a one-codon backward translocation of tRNAs on improperly translocated ribosomes. Back-translocation proceeds from a post-translocation (POST) complex to a pre-translocation (PRE) complex, thus giving elongation factor G a second chance to translocate the tRNAs correctly. Binds to ribosomes in a GTP-dependent manner. In Campylobacter lari (strain RM2100 / D67 / ATCC BAA-1060), this protein is Elongation factor 4.